Here is a 459-residue protein sequence, read N- to C-terminus: Cyclin-dependent kinase F-4 (459 aa).

One can recognise a Protein kinase domain in the interval phenylalanine 4–phenylalanine 283. Residues valine 10–valine 18 and lysine 33 contribute to the ATP site. The Proton acceptor role is filled by aspartate 125. Serine 151 carries the phosphoserine modification. Threonine 156 carries the post-translational modification Phosphothreonine. A disordered region spans residues lysine 310 to glycine 397. Composition is skewed to polar residues over residues serine 322 to glycine 346 and glutamate 366 to arginine 375.

This sequence belongs to the protein kinase superfamily. CMGC Ser/Thr protein kinase family. CDC2/CDKX subfamily.

It carries out the reaction L-seryl-[protein] + ATP = O-phospho-L-seryl-[protein] + ADP + H(+). It catalyses the reaction L-threonyl-[protein] + ATP = O-phospho-L-threonyl-[protein] + ADP + H(+). The enzyme catalyses [DNA-directed RNA polymerase] + ATP = phospho-[DNA-directed RNA polymerase] + ADP + H(+). The chain is Cyclin-dependent kinase F-4 (CDKF-4) from Oryza sativa subsp. japonica (Rice).